Here is a 162-residue protein sequence, read N- to C-terminus: 6,7-dimethyl-8-ribityllumazine synthase (162 aa).

5-amino-6-(D-ribitylamino)uracil-binding positions include F22, 56–58 (TFE), and 80–82 (AVI). 85 to 86 (GT) is a binding site for (2S)-2-hydroxy-3-oxobutyl phosphate. H88 (proton donor) is an active-site residue. M113 is a 5-amino-6-(D-ribitylamino)uracil binding site. R127 contacts (2S)-2-hydroxy-3-oxobutyl phosphate.

The protein belongs to the DMRL synthase family.

It catalyses the reaction (2S)-2-hydroxy-3-oxobutyl phosphate + 5-amino-6-(D-ribitylamino)uracil = 6,7-dimethyl-8-(1-D-ribityl)lumazine + phosphate + 2 H2O + H(+). It functions in the pathway cofactor biosynthesis; riboflavin biosynthesis; riboflavin from 2-hydroxy-3-oxobutyl phosphate and 5-amino-6-(D-ribitylamino)uracil: step 1/2. Functionally, catalyzes the formation of 6,7-dimethyl-8-ribityllumazine by condensation of 5-amino-6-(D-ribitylamino)uracil with 3,4-dihydroxy-2-butanone 4-phosphate. This is the penultimate step in the biosynthesis of riboflavin. This is 6,7-dimethyl-8-ribityllumazine synthase from Anaeromyxobacter dehalogenans (strain 2CP-C).